A 231-amino-acid polypeptide reads, in one-letter code: Verlamelin biosynthesis protein B (231 aa).

Its pathway is secondary metabolite biosynthesis. In terms of biological role, part of the gene cluster that mediates the biosynthesis of verlamelin, a lipopeptide that exhibits antifungal activity against plant pathogenic fungi. Verlamelin is a cyclic hexadepsipeptide and is bridged by ester bonding between a 5-hydroxytetradecanoic acid moiety and a carboxyl group on the terminal Val of amide-bonded tetradecanoyl-hexapeptide D-allo-Thr-D-Ala-L-Pro-L-Gln-D-Tyr-L-Val. VlmA and vlmB are altogether regarded as essential components in the biosynthesis of 5-hydroxytetradecanoic acid. VlmA catalyzes the hydroxylation at position C5 of tetradecanoic acid produced in primary metabolism, while the precise function of vlmB still remains to be solved. To be loaded onto the waiting NRPS, 5-hydroxytetradecanoic acid is activated in the form of acyladenylate by the AMP-dependent ligase vlmC. VlmS seems to accept the fatty-acyl intermediate onto the initial module to further elongate amino acid residues by the downstream modules. In addition, in the last module at its C-terminus, vlmS contains a surplus condensation (C) domain that may be involved in cyclization, the last step to form verlamelin. The sequence is that of Verlamelin biosynthesis protein B from Lecanicillium sp.